The chain runs to 122 residues: Defensin-like protein 181 (122 aa).

The N-terminal stretch at M1–A26 is a signal peptide. Intrachain disulfides connect C29–C70, C36–C55, C39–C64, C43–C66, C76–C122, C87–C107, C92–C116, and C96–C118.

It belongs to the DEFL family.

The protein resides in the secreted. Functionally, confers broad-spectrum resistance to pathogens. The protein is Defensin-like protein 181 (PDF3.1) of Arabidopsis thaliana (Mouse-ear cress).